The chain runs to 905 residues: Isoleucine--tRNA ligase (905 aa).

Residues 56-66 (PYANGNIHMGT) carry the 'HIGH' region motif. Glu-563 is a binding site for L-isoleucyl-5'-AMP. The short motif at 604-608 (KMSKS) is the 'KMSKS' region element. ATP is bound at residue Lys-607.

Belongs to the class-I aminoacyl-tRNA synthetase family. IleS type 1 subfamily. As to quaternary structure, monomer.

It localises to the cytoplasm. The enzyme catalyses tRNA(Ile) + L-isoleucine + ATP = L-isoleucyl-tRNA(Ile) + AMP + diphosphate. Catalyzes the attachment of isoleucine to tRNA(Ile). As IleRS can inadvertently accommodate and process structurally similar amino acids such as valine, to avoid such errors it has two additional distinct tRNA(Ile)-dependent editing activities. One activity is designated as 'pretransfer' editing and involves the hydrolysis of activated Val-AMP. The other activity is designated 'posttransfer' editing and involves deacylation of mischarged Val-tRNA(Ile). The polypeptide is Isoleucine--tRNA ligase (Pelagibacter ubique (strain HTCC1062)).